Reading from the N-terminus, the 855-residue chain is tRNA(Met) cytidine acetyltransferase TmcA (855 aa).

Residues Gln-260, 286–295, and Arg-438 each bind ATP; that span reads GRGKSALLGI. An N-acetyltransferase domain is found at 480-663; sequence PDLRYWFEDP…GEYSVAVIRP (184 aa). Residues 590-592, 597-603, Glu-630, and Arg-637 contribute to the acetyl-CoA site; these read IAT and MRHGLGS.

This sequence belongs to the RNA cytidine acetyltransferase family. TmcA subfamily.

Its subcellular location is the cytoplasm. The catalysed reaction is cytidine(34) in elongator tRNA(Met) + acetyl-CoA + ATP + H2O = N(4)-acetylcytidine(34) in elongator tRNA(Met) + ADP + phosphate + CoA + H(+). Functionally, catalyzes the formation of N(4)-acetylcytidine (ac(4)C) at the wobble position of tRNA(Met), by using acetyl-CoA as an acetyl donor and ATP (or GTP). The sequence is that of tRNA(Met) cytidine acetyltransferase TmcA from Methanopyrus kandleri (strain AV19 / DSM 6324 / JCM 9639 / NBRC 100938).